A 591-amino-acid polypeptide reads, in one-letter code: Metalloendopeptidase OPG085 (591 aa).

His41 contacts Zn(2+). Glu44 is an active-site residue. Zn(2+) is bound by residues His45 and Glu112.

This sequence belongs to the peptidase M44 family. Zn(2+) serves as cofactor. Undergoes proteolytic processing during the course of infection. May be cleaved into 46 kDa and 22 kDa products (Potential).

It is found in the virion. Probably involved in maturation of some viral proteins by processing them preferentially at Ala-Gly-|-Ser/Thr/Lys motifs. Does not seem to be responsible for the cleavage of major core proteins. This chain is Metalloendopeptidase OPG085 (OPG085), found in Variola virus (isolate Human/India/Ind3/1967) (VARV).